Here is a 121-residue protein sequence, read N- to C-terminus: Ribonuclease P protein component (121 aa).

It belongs to the RnpA family. In terms of assembly, consists of a catalytic RNA component (M1 or rnpB) and a protein subunit.

The enzyme catalyses Endonucleolytic cleavage of RNA, removing 5'-extranucleotides from tRNA precursor.. Functionally, RNaseP catalyzes the removal of the 5'-leader sequence from pre-tRNA to produce the mature 5'-terminus. It can also cleave other RNA substrates such as 4.5S RNA. The protein component plays an auxiliary but essential role in vivo by binding to the 5'-leader sequence and broadening the substrate specificity of the ribozyme. This chain is Ribonuclease P protein component, found in Neisseria gonorrhoeae (strain ATCC 700825 / FA 1090).